We begin with the raw amino-acid sequence, 250 residues long: Undecaprenyl-diphosphatase (250 aa).

7 helical membrane passes run 35 to 55 (DLSVFALLHLATLAAIVIFVG), 73 to 93 (INLTLKIIVSTIPAAIFGVLL), 100 to 120 (SLSNLKIISFFFLVTSAALLI), 146 to 166 (ALAIFPGISRSGFTLFGSLLI), 171 to 191 (EIALKYSFLVSIPVILGAGLL), 200 to 220 (SYSISSAIVAFFFGLLSLFIL), and 229 to 249 (LKIFSAYCIFISIFSFVLGGI).

It belongs to the UppP family.

It localises to the cell inner membrane. It carries out the reaction di-trans,octa-cis-undecaprenyl diphosphate + H2O = di-trans,octa-cis-undecaprenyl phosphate + phosphate + H(+). Catalyzes the dephosphorylation of undecaprenyl diphosphate (UPP). Confers resistance to bacitracin. The polypeptide is Undecaprenyl-diphosphatase (Thermosipho melanesiensis (strain DSM 12029 / CIP 104789 / BI429)).